The chain runs to 1170 residues: Thrombospondin-2 (1170 aa).

Positions 1 to 18 are cleaved as a signal peptide; the sequence is MLWPLLLLALWAWPSAQA. Residues 19 to 215 form the Laminin G-like domain; that stretch reads GDQDEDTAFD…LQNVYLVFEN (197 aa). The interval 19–232 is heparin-binding; sequence GDQDEDTAFD…KKGCQQSQGA (214 aa). Asparagine 151, asparagine 316, and asparagine 330 each carry an N-linked (GlcNAc...) asparagine glycan. Positions 318-375 constitute a VWFC domain; the sequence is SACWQDGRFFAENETWVVDSCTKCTCKKFKTVCHQISCPPATCADPWFVEGECCPSCV. 3 TSP type-1 domains span residues 379 to 429, 435 to 490, and 492 to 547; these read EEGW…GRCD, DGGW…PPCP, and DGRW…KSCP. Cystine bridges form between cysteine 391–cysteine 423, cysteine 395–cysteine 428, cysteine 406–cysteine 413, cysteine 447–cysteine 484, cysteine 451–cysteine 489, cysteine 462–cysteine 474, cysteine 504–cysteine 541, cysteine 508–cysteine 546, cysteine 519–cysteine 531, cysteine 551–cysteine 562, cysteine 556–cysteine 572, cysteine 575–cysteine 586, cysteine 592–cysteine 608, cysteine 599–cysteine 617, cysteine 620–cysteine 644, cysteine 650–cysteine 663, cysteine 657–cysteine 676, cysteine 678–cysteine 689, cysteine 705–cysteine 713, cysteine 718–cysteine 738, cysteine 754–cysteine 774, cysteine 777–cysteine 797, cysteine 813–cysteine 833, cysteine 836–cysteine 856, cysteine 874–cysteine 894, and cysteine 910–cysteine 930. Asparagine 455 carries N-linked (GlcNAc...) asparagine glycosylation. Residues 547 to 587 enclose the EGF-like 1 domain; it reads PIDGCLSNPCFPGAECSSFPDGSWSCGSCPGGFLGNGTHCE. A glycan (N-linked (GlcNAc...) asparagine) is linked at asparagine 582. Positions 646 to 690 constitute an EGF-like 2 domain; that stretch reads PENPCKDKTHSCHRHAECIYLGHFSDPMYKCECQTGYAGDGLICG. 8 TSP type-3 repeats span residues 691–726, 727–762, 763–785, 786–821, 822–844, 845–882, 883–918, and 919–954; these read EDSD…NSGQ, EDFD…NPRQ, FDYD…NPAQ, IDTD…NTDQ, RDTD…NPDQ, TDVD…NANQ, ADHD…NPDQ, and EDSD…AISE. Asparagine 708 carries N-linked (GlcNAc...) asparagine glycosylation. Residues 731–750 form a disordered region; sequence KDGIGDACDDDDDNDGVSDE. Residues 737-747 show a composition bias toward acidic residues; the sequence is ACDDDDDNDGV. Positions 841–944 are disordered; that stretch reads NPDQTDVDND…DNDSIPDIDD (104 aa). Acidic residues-rich tracts occupy residues 845 to 864 and 894 to 903; these read TDVD…DIDE and CDSDDDNDGI. Positions 923-933 are enriched in basic and acidic residues; sequence GDRRGDACKDD. The short motif at 926–928 is the Cell attachment site element; that stretch reads RGD. Over residues 934-944 the composition is skewed to acidic residues; it reads FDNDSIPDIDD. N-linked (GlcNAc...) asparagine glycosylation is found at asparagine 936 and asparagine 1067. Cysteine 946 and cysteine 1167 are joined by a disulfide. A TSP C-terminal domain is found at 958–1170; that stretch reads RNFQMVHLDP…SDLKYECRDV (213 aa).

This sequence belongs to the thrombospondin family. As to quaternary structure, homotrimer; disulfide-linked. Can bind to fibrinogen, fibronectin, laminin and type V collagen. Interacts (via the TSP type I repeats) with CD36; the interaction conveys an antiangiogenic effect. Interacts (via the TSP type I repeats) with HRG; the interaction blocks the antiangiogenic effect of THBS2 with CD36.

Functionally, adhesive glycoprotein that mediates cell-to-cell and cell-to-matrix interactions. Ligand for CD36 mediating antiangiogenic properties. The sequence is that of Thrombospondin-2 (THBS2) from Bos taurus (Bovine).